We begin with the raw amino-acid sequence, 256 residues long: Thiazole synthase (256 aa).

The Schiff-base intermediate with DXP role is filled by K95. Residues G156, 182–183, and 204–205 each bind 1-deoxy-D-xylulose 5-phosphate; these read AG and NT.

This sequence belongs to the ThiG family. Homotetramer. Forms heterodimers with either ThiH or ThiS.

The protein localises to the cytoplasm. It carries out the reaction [ThiS sulfur-carrier protein]-C-terminal-Gly-aminoethanethioate + 2-iminoacetate + 1-deoxy-D-xylulose 5-phosphate = [ThiS sulfur-carrier protein]-C-terminal Gly-Gly + 2-[(2R,5Z)-2-carboxy-4-methylthiazol-5(2H)-ylidene]ethyl phosphate + 2 H2O + H(+). It functions in the pathway cofactor biosynthesis; thiamine diphosphate biosynthesis. Catalyzes the rearrangement of 1-deoxy-D-xylulose 5-phosphate (DXP) to produce the thiazole phosphate moiety of thiamine. Sulfur is provided by the thiocarboxylate moiety of the carrier protein ThiS. In vitro, sulfur can be provided by H(2)S. In Salmonella choleraesuis (strain SC-B67), this protein is Thiazole synthase.